A 412-amino-acid chain; its full sequence is Multifunctional CCA protein (412 aa).

Residues glycine 8 and arginine 11 each coordinate ATP. Glycine 8 and arginine 11 together coordinate CTP. Aspartate 21 and aspartate 23 together coordinate Mg(2+). ATP-binding residues include arginine 91, arginine 137, and arginine 140. The CTP site is built by arginine 91, arginine 137, and arginine 140. The HD domain occupies 225–326 (TGIHVMMVID…ADMLQATDAY (102 aa)).

Belongs to the tRNA nucleotidyltransferase/poly(A) polymerase family. Bacterial CCA-adding enzyme type 1 subfamily. In terms of assembly, monomer. Can also form homodimers and oligomers. The cofactor is Mg(2+). It depends on Ni(2+) as a cofactor.

It carries out the reaction a tRNA precursor + 2 CTP + ATP = a tRNA with a 3' CCA end + 3 diphosphate. The enzyme catalyses a tRNA with a 3' CCA end + 2 CTP + ATP = a tRNA with a 3' CCACCA end + 3 diphosphate. In terms of biological role, catalyzes the addition and repair of the essential 3'-terminal CCA sequence in tRNAs without using a nucleic acid template. Adds these three nucleotides in the order of C, C, and A to the tRNA nucleotide-73, using CTP and ATP as substrates and producing inorganic pyrophosphate. tRNA 3'-terminal CCA addition is required both for tRNA processing and repair. Also involved in tRNA surveillance by mediating tandem CCA addition to generate a CCACCA at the 3' terminus of unstable tRNAs. While stable tRNAs receive only 3'-terminal CCA, unstable tRNAs are marked with CCACCA and rapidly degraded. This is Multifunctional CCA protein from Nitrosomonas eutropha (strain DSM 101675 / C91 / Nm57).